The following is a 548-amino-acid chain: Folylpolyglutamate synthase (548 aa).

An ATP-binding site is contributed by 130–133 (GKGS). Ser157, Glu234, and His262 together coordinate Mg(2+). ATP-binding residues include Arg382 and Asp396.

This sequence belongs to the folylpolyglutamate synthase family. It depends on a monovalent cation as a cofactor.

It localises to the mitochondrion inner membrane. The protein localises to the mitochondrion matrix. Its subcellular location is the cytoplasm. The catalysed reaction is (6S)-5,6,7,8-tetrahydrofolyl-(gamma-L-Glu)(n) + L-glutamate + ATP = (6S)-5,6,7,8-tetrahydrofolyl-(gamma-L-Glu)(n+1) + ADP + phosphate + H(+). The protein operates within cofactor biosynthesis; tetrahydrofolylpolyglutamate biosynthesis. Functionally, catalyzes conversion of folates to polyglutamate derivatives allowing concentration of folate compounds in the cell and the intracellular retention of these cofactors, which are important substrates for most of the folate-dependent enzymes that are involved in one-carbon transfer reactions involved in purine, pyrimidine and amino acid synthesis. Required for methionine synthesis and maintenance of intact mitochondrial DNA. Involved in telomere maintenance. The protein is Folylpolyglutamate synthase of Saccharomyces cerevisiae (strain FostersO) (Baker's yeast).